The primary structure comprises 164 residues: ATP synthase subunit b 1 (164 aa).

The helical transmembrane segment at 4–24 (MELAELWVAVAFFVFVGILLY) threads the bilayer.

This sequence belongs to the ATPase B chain family. In terms of assembly, F-type ATPases have 2 components, F(1) - the catalytic core - and F(0) - the membrane proton channel. F(1) has five subunits: alpha(3), beta(3), gamma(1), delta(1), epsilon(1). F(0) has three main subunits: a(1), b(2) and c(10-14). The alpha and beta chains form an alternating ring which encloses part of the gamma chain. F(1) is attached to F(0) by a central stalk formed by the gamma and epsilon chains, while a peripheral stalk is formed by the delta and b chains.

It localises to the cell inner membrane. In terms of biological role, f(1)F(0) ATP synthase produces ATP from ADP in the presence of a proton or sodium gradient. F-type ATPases consist of two structural domains, F(1) containing the extramembraneous catalytic core and F(0) containing the membrane proton channel, linked together by a central stalk and a peripheral stalk. During catalysis, ATP synthesis in the catalytic domain of F(1) is coupled via a rotary mechanism of the central stalk subunits to proton translocation. Functionally, component of the F(0) channel, it forms part of the peripheral stalk, linking F(1) to F(0). This chain is ATP synthase subunit b 1, found in Azorhizobium caulinodans (strain ATCC 43989 / DSM 5975 / JCM 20966 / LMG 6465 / NBRC 14845 / NCIMB 13405 / ORS 571).